A 392-amino-acid polypeptide reads, in one-letter code: Formate-dependent phosphoribosylglycinamide formyltransferase (392 aa).

N(1)-(5-phospho-beta-D-ribosyl)glycinamide-binding positions include 22–23 (EL) and Glu82. ATP-binding positions include Arg114, Lys155, 160–165 (SSGKGQ), 195–198 (EGVV), and Glu203. The ATP-grasp domain maps to 119–308 (RLAAEELQLP…EFALHVRAFL (190 aa)). Residues Glu267 and Glu279 each contribute to the Mg(2+) site. N(1)-(5-phospho-beta-D-ribosyl)glycinamide contacts are provided by residues Asp286, Lys355, and 362–363 (RR).

Belongs to the PurK/PurT family. Homodimer.

It catalyses the reaction N(1)-(5-phospho-beta-D-ribosyl)glycinamide + formate + ATP = N(2)-formyl-N(1)-(5-phospho-beta-D-ribosyl)glycinamide + ADP + phosphate + H(+). The protein operates within purine metabolism; IMP biosynthesis via de novo pathway; N(2)-formyl-N(1)-(5-phospho-D-ribosyl)glycinamide from N(1)-(5-phospho-D-ribosyl)glycinamide (formate route): step 1/1. In terms of biological role, involved in the de novo purine biosynthesis. Catalyzes the transfer of formate to 5-phospho-ribosyl-glycinamide (GAR), producing 5-phospho-ribosyl-N-formylglycinamide (FGAR). Formate is provided by PurU via hydrolysis of 10-formyl-tetrahydrofolate. This Shigella boydii serotype 18 (strain CDC 3083-94 / BS512) protein is Formate-dependent phosphoribosylglycinamide formyltransferase.